A 133-amino-acid chain; its full sequence is Ribosome-binding factor A (133 aa).

The protein belongs to the RbfA family. As to quaternary structure, monomer. Binds 30S ribosomal subunits, but not 50S ribosomal subunits or 70S ribosomes.

It is found in the cytoplasm. One of several proteins that assist in the late maturation steps of the functional core of the 30S ribosomal subunit. Associates with free 30S ribosomal subunits (but not with 30S subunits that are part of 70S ribosomes or polysomes). Required for efficient processing of 16S rRNA. May interact with the 5'-terminal helix region of 16S rRNA. This chain is Ribosome-binding factor A, found in Acinetobacter baylyi (strain ATCC 33305 / BD413 / ADP1).